The chain runs to 322 residues: 4-hydroxythreonine-4-phosphate dehydrogenase (322 aa).

T132 lines the substrate pocket. Positions 160, 205, and 260 each coordinate a divalent metal cation. Substrate is bound by residues K268, N277, and R286.

Belongs to the PdxA family. As to quaternary structure, homodimer. The cofactor is Zn(2+). Requires Mg(2+) as cofactor. Co(2+) is required as a cofactor.

It is found in the cytoplasm. The catalysed reaction is 4-(phosphooxy)-L-threonine + NAD(+) = 3-amino-2-oxopropyl phosphate + CO2 + NADH. It functions in the pathway cofactor biosynthesis; pyridoxine 5'-phosphate biosynthesis; pyridoxine 5'-phosphate from D-erythrose 4-phosphate: step 4/5. Functionally, catalyzes the NAD(P)-dependent oxidation of 4-(phosphooxy)-L-threonine (HTP) into 2-amino-3-oxo-4-(phosphooxy)butyric acid which spontaneously decarboxylates to form 3-amino-2-oxopropyl phosphate (AHAP). The polypeptide is 4-hydroxythreonine-4-phosphate dehydrogenase (Xanthomonas campestris pv. campestris (strain 8004)).